A 365-amino-acid chain; its full sequence is Sulfotransferase 2B1 (365 aa).

70–75 serves as a coordination point for 3'-phosphoadenylyl sulfate; that stretch reads KSGTTW. Positions 98, 103, and 125 each coordinate substrate. His-125 acts as the Proton acceptor in catalysis. 3'-phosphoadenylyl sulfate-binding positions include Arg-147, Ser-155, Tyr-210, 244-249, and 274-276; these read STFSAM and RKG. The segment at 303–365 is disordered; that stretch reads GMPTFPWDED…ASETPHPRPS (63 aa). Residues 309–325 show a composition bias toward acidic residues; sequence WDEDPEEDGSPDPEPSP. Ser-348 bears the Phosphoserine mark.

The protein belongs to the sulfotransferase 1 family. Phosphorylated. In terms of tissue distribution, expressed in the stratum granulosum-stratum corneum junction in the skin (at protein level). Expressed highly in placenta, prostate and trachea and lower expression in the small intestine and lung.

The protein localises to the cytoplasm. It localises to the cytosol. It is found in the microsome. Its subcellular location is the nucleus. The catalysed reaction is an alcohol + 3'-phosphoadenylyl sulfate = an alkyl sulfate + adenosine 3',5'-bisphosphate + H(+). The enzyme catalyses 3beta-hydroxyandrost-5-en-17-one + 3'-phosphoadenylyl sulfate = dehydroepiandrosterone 3-sulfate + adenosine 3',5'-bisphosphate + H(+). It carries out the reaction (24S)-hydroxycholesterol + 3'-phosphoadenylyl sulfate = (24S)-hydroxycholesterol 3-sulfate + adenosine 3',5'-bisphosphate + H(+). It catalyses the reaction cholesterol + 3'-phosphoadenylyl sulfate = cholesterol sulfate + adenosine 3',5'-bisphosphate + H(+). The catalysed reaction is pregnenolone + 3'-phosphoadenylyl sulfate = pregnenolone sulfate + adenosine 3',5'-bisphosphate + H(+). In terms of biological role, sulfotransferase that utilizes 3'-phospho-5'-adenylyl sulfate (PAPS) as sulfonate donor to catalyze the sulfate conjugation. Responsible for the sulfation of cholesterol. Catalyzes sulfation of the 3beta-hydroxyl groups of steroids, such as, pregnenolone and dehydroepiandrosterone (DHEA). Preferentially sulfonates cholesterol, while it also has significant activity with pregnenolone and DHEA. Plays a role in epidermal cholesterol metabolism and in the regulation of epidermal proliferation and differentiation. Its function is as follows. Sulfonates pregnenolone but not cholesterol. The sequence is that of Sulfotransferase 2B1 (SULT2B1) from Homo sapiens (Human).